Consider the following 147-residue polypeptide: Large ribosomal subunit protein bL9 (147 aa).

It belongs to the bacterial ribosomal protein bL9 family.

In terms of biological role, binds to the 23S rRNA. The polypeptide is Large ribosomal subunit protein bL9 (Clostridium botulinum (strain 657 / Type Ba4)).